A 273-amino-acid chain; its full sequence is MSLQNIIETAFENRADITPTTVTPEVKEAVLETIRQLDSGKLRVAERLGVGEWKVNEWAKKAVLLSFRIQDNEVLNDGVNKYFDKVPTKFADWSEDEFKNAGFRAVPGAVARRGSFVAKNVVLMPSYVNIGAYVDEGAMVDTWATVGSCAQIGKNVHLSGGVGIGGVLEPLQASPTIIEDNCFIGARSEIVEGVIVEEGSVISMGVFIGQSTKIFDRTTGEIYQGRVPAGSVVVSGSMPSKDGSHSLYCAVIVKRVDAQTRAKTSVNELLRGI.

Residues Arg-104 and Asp-141 each coordinate substrate.

The protein belongs to the transferase hexapeptide repeat family. As to quaternary structure, homotrimer.

The protein resides in the cytoplasm. The enzyme catalyses (S)-2,3,4,5-tetrahydrodipicolinate + succinyl-CoA + H2O = (S)-2-succinylamino-6-oxoheptanedioate + CoA. Its pathway is amino-acid biosynthesis; L-lysine biosynthesis via DAP pathway; LL-2,6-diaminopimelate from (S)-tetrahydrodipicolinate (succinylase route): step 1/3. This Neisseria meningitidis serogroup A / serotype 4A (strain DSM 15465 / Z2491) protein is 2,3,4,5-tetrahydropyridine-2,6-dicarboxylate N-succinyltransferase.